The sequence spans 1409 residues: Copia protein (1409 aa).

The segment at 230–247 (VKCHHCGREGHIKKDCFH) adopts a CCHC-type zinc-finger fold. Asp292 serves as the catalytic For protease activity. An Integrase catalytic domain is found at 476–644 (HIKRPLFVVH…TPYEMWHNKK (169 aa)). Disordered regions lie at residues 760 to 780 (SKESENKNFPNDSRKIIQTEF) and 805 to 851 (NESK…NDGI). Residues 827 to 841 (ESRESETAEHLKEIG) show a composition bias toward basic and acidic residues.

The chain is Copia protein (GIP) from Drosophila melanogaster (Fruit fly).